The sequence spans 510 residues: 2,3-bisphosphoglycerate-independent phosphoglycerate mutase (510 aa).

Positions 14 and 64 each coordinate Mn(2+). S64 functions as the Phosphoserine intermediate in the catalytic mechanism. Substrate contacts are provided by residues H125, 155-156, R187, R193, 259-262, and K332; these read RD and RADR. The Mn(2+) site is built by D399, H403, D440, H441, and H459.

Belongs to the BPG-independent phosphoglycerate mutase family. Monomer. It depends on Mn(2+) as a cofactor.

It catalyses the reaction (2R)-2-phosphoglycerate = (2R)-3-phosphoglycerate. The protein operates within carbohydrate degradation; glycolysis; pyruvate from D-glyceraldehyde 3-phosphate: step 3/5. Functionally, catalyzes the interconversion of 2-phosphoglycerate and 3-phosphoglycerate. In Pseudomonas savastanoi pv. phaseolicola (strain 1448A / Race 6) (Pseudomonas syringae pv. phaseolicola (strain 1448A / Race 6)), this protein is 2,3-bisphosphoglycerate-independent phosphoglycerate mutase.